Reading from the N-terminus, the 136-residue chain is Transcription antitermination protein NusB (136 aa).

The protein belongs to the NusB family.

Functionally, involved in transcription antitermination. Required for transcription of ribosomal RNA (rRNA) genes. Binds specifically to the boxA antiterminator sequence of the ribosomal RNA (rrn) operons. This is Transcription antitermination protein NusB from Pseudoalteromonas translucida (strain TAC 125).